A 312-amino-acid polypeptide reads, in one-letter code: HPr kinase/phosphorylase (312 aa).

Catalysis depends on residues His139 and Lys160. 154-161 lines the ATP pocket; sequence GDSGIGKS. Residue Ser161 coordinates Mg(2+). Asp178 functions as the Proton acceptor; for phosphorylation activity. Proton donor; for dephosphorylation activity in the catalytic mechanism. The tract at residues 202 to 211 is important for the catalytic mechanism of both phosphorylation and dephosphorylation; that stretch reads IEIRGVGIID. Position 203 (Glu203) interacts with Mg(2+). The active site involves Arg244. The tract at residues 265–270 is important for the catalytic mechanism of dephosphorylation; it reads PVKTGR.

It belongs to the HPrK/P family. In terms of assembly, homohexamer. Mg(2+) serves as cofactor.

It catalyses the reaction [HPr protein]-L-serine + ATP = [HPr protein]-O-phospho-L-serine + ADP + H(+). The catalysed reaction is [HPr protein]-O-phospho-L-serine + phosphate + H(+) = [HPr protein]-L-serine + diphosphate. In terms of biological role, catalyzes the ATP- as well as the pyrophosphate-dependent phosphorylation of a specific serine residue in HPr, a phosphocarrier protein of the phosphoenolpyruvate-dependent sugar phosphotransferase system (PTS). HprK/P also catalyzes the pyrophosphate-producing, inorganic phosphate-dependent dephosphorylation (phosphorolysis) of seryl-phosphorylated HPr (P-Ser-HPr). The two antagonistic activities of HprK/P are regulated by several intracellular metabolites, which change their concentration in response to the absence or presence of rapidly metabolisable carbon sources (glucose, fructose, etc.) in the growth medium. Therefore, by controlling the phosphorylation state of HPr, HPrK/P is a sensor enzyme that plays a major role in the regulation of carbon metabolism and sugar transport: it mediates carbon catabolite repression (CCR), and regulates PTS-catalyzed carbohydrate uptake and inducer exclusion. The chain is HPr kinase/phosphorylase from Streptococcus pneumoniae (strain ATCC BAA-255 / R6).